A 235-amino-acid chain; its full sequence is uncharacterized protein (235 aa).

The region spanning isoleucine 2 to arginine 235 is the ABC transporter domain. Glycine 38–serine 45 contributes to the ATP binding site.

It belongs to the ABC transporter superfamily.

This is an uncharacterized protein from Methanocaldococcus jannaschii (strain ATCC 43067 / DSM 2661 / JAL-1 / JCM 10045 / NBRC 100440) (Methanococcus jannaschii).